Here is a 446-residue protein sequence, read N- to C-terminus: Maltoporin (446 aa).

The N-terminal stretch at 1–25 is a signal peptide; sequence MMITLRKLPLAVAVAAGVMSAQAMA.

This sequence belongs to the porin LamB (TC 1.B.3) family. In terms of assembly, homotrimer formed of three 18-stranded antiparallel beta-barrels, containing three independent channels.

It is found in the cell outer membrane. The enzyme catalyses beta-maltose(in) = beta-maltose(out). Its function is as follows. Involved in the transport of maltose and maltodextrins. This chain is Maltoporin, found in Escherichia coli O8 (strain IAI1).